The following is a 686-amino-acid chain: Protein SDA1 homolog (686 aa).

S232, S234, and S236 each carry phosphoserine. Residues 254 to 315 (KKGSKNKKKL…SCKERFEVKM (62 aa)) adopt a coiled-coil conformation. Residues 484–508 (LEKEENTENDEDGWESASLSEEEED) are disordered. The span at 490-508 (TENDEDGWESASLSEEEED) shows a compositional bias: acidic residues. Phosphothreonine is present on T551. The disordered stretch occupies residues 563–586 (MKKEMDAAPGKAQKRKYLDMDSDE). Residues S584, S588, and S594 each carry the phosphoserine modification. Residues 604-649 (KPKSDKETRLATAMAGRTDRKEFVRKKTKINPFSSSTNKEKKKQKN) are disordered.

This sequence belongs to the SDA1 family.

The protein resides in the nucleus. It localises to the nucleolus. In terms of biological role, required for 60S pre-ribosomal subunits export to the cytoplasm. The protein is Protein SDA1 homolog (Sdad1) of Rattus norvegicus (Rat).